Reading from the N-terminus, the 351-residue chain is Rab9 effector protein with kelch motifs (351 aa).

Kelch repeat units lie at residues 54–102 (KIVI…PESE), 105–156 (SLWV…TNSA), 162–210 (LFVF…VITA), 214–263 (DIYI…TFNK), 264–313 (NIFI…LLPW), and 328–351 (LCFV…TVLT).

Rab9 effector required for endosome to trans-Golgi network (TGN) transport. The protein is Rab9 effector protein with kelch motifs (rabepk) of Danio rerio (Zebrafish).